A 313-amino-acid chain; its full sequence is Probable lysophospholipase L2 (313 aa).

It is found in the cell inner membrane. It catalyses the reaction a 1-acyl-sn-glycero-3-phosphocholine + H2O = sn-glycerol 3-phosphocholine + a fatty acid + H(+). This chain is Probable lysophospholipase L2 (pldB), found in Haemophilus influenzae (strain ATCC 51907 / DSM 11121 / KW20 / Rd).